Here is a 445-residue protein sequence, read N- to C-terminus: Phosphoglucosamine mutase (445 aa).

The Phosphoserine intermediate role is filled by Ser99. Mg(2+)-binding residues include Ser99, Asp242, Asp244, and Asp246. Ser99 carries the post-translational modification Phosphoserine.

This sequence belongs to the phosphohexose mutase family. It depends on Mg(2+) as a cofactor. Post-translationally, activated by phosphorylation.

The enzyme catalyses alpha-D-glucosamine 1-phosphate = D-glucosamine 6-phosphate. Its function is as follows. Catalyzes the conversion of glucosamine-6-phosphate to glucosamine-1-phosphate. The sequence is that of Phosphoglucosamine mutase from Helicobacter pylori (strain P12).